The chain runs to 98 residues: Large ribosomal subunit protein eL14 (98 aa).

This sequence belongs to the eukaryotic ribosomal protein eL14 family.

This is Large ribosomal subunit protein eL14 from Hyperthermus butylicus (strain DSM 5456 / JCM 9403 / PLM1-5).